We begin with the raw amino-acid sequence, 142 residues long: Hemoglobin subunit alpha (142 aa).

One can recognise a Globin domain in the interval 2–142 (VLSPADKSNV…VSTVLTSKYR (141 aa)). Residue Ser4 is modified to Phosphoserine. 2 positions are modified to N6-succinyllysine: Lys8 and Lys12. Position 17 is an N6-acetyllysine; alternate (Lys17). The residue at position 17 (Lys17) is an N6-succinyllysine; alternate. Tyr25 is modified (phosphotyrosine). Ser36 is modified (phosphoserine). The residue at position 41 (Lys41) is an N6-succinyllysine. Ser50 bears the Phosphoserine mark. An O2-binding site is contributed by His59. Residue His88 coordinates heme b. Ser103 carries the post-translational modification Phosphoserine. At Thr109 the chain carries Phosphothreonine. Phosphoserine occurs at positions 125 and 132. Residues Thr135 and Thr138 each carry the phosphothreonine modification. The residue at position 139 (Ser139) is a Phosphoserine.

It belongs to the globin family. As to quaternary structure, heterotetramer of two alpha chains and two beta chains. Red blood cells.

In terms of biological role, involved in oxygen transport from the lung to the various peripheral tissues. Its function is as follows. Hemopressin acts as an antagonist peptide of the cannabinoid receptor CNR1. Hemopressin-binding efficiently blocks cannabinoid receptor CNR1 and subsequent signaling. The chain is Hemoglobin subunit alpha (HBA) from Chlorocebus aethiops (Green monkey).